The following is a 193-amino-acid chain: Cilia- and flagella-associated protein 20 (193 aa).

The protein belongs to the CFAP20 family. In terms of assembly, microtubule inner protein component of sperm flagellar doublet microtubules.

The protein localises to the nucleus. It localises to the cytoplasm. It is found in the cytoskeleton. Its subcellular location is the microtubule organizing center. The protein resides in the centrosome. The protein localises to the centriole. It localises to the cilium basal body. It is found in the cilium axoneme. Its subcellular location is the flagellum axoneme. Functionally, cilium- and flagellum-specific protein that plays a role in axonemal structure organization and motility. Microtubule inner protein (MIP) part of the dynein-decorated doublet microtubules (DMTs) in cilia axoneme, which is required for motile cilia beating. Involved in the regulation of the size and morphology of cilia. Required for axonemal microtubules polyglutamylation. The chain is Cilia- and flagella-associated protein 20 from Homo sapiens (Human).